Consider the following 533-residue polypeptide: Retinoid isomerohydrolase (533 aa).

The residue at position 2 (S2) is an N-acetylserine. Residues T101 and T105 each carry the phosphothreonine modification. C112 carries S-palmitoyl cysteine; in membrane form lipidation. An N6-acetyllysine modification is found at K113. At S117 the chain carries Phosphoserine. H180 is a binding site for Fe cation. The S-palmitoyl cysteine; in membrane form moiety is linked to residue C231. Residues H241 and H313 each contribute to the Fe cation site. 2 S-palmitoyl cysteine; in membrane form lipidation sites follow: C329 and C330. Position 527 (H527) interacts with Fe cation.

This sequence belongs to the carotenoid oxygenase family. In terms of assembly, interacts with MYO7A; this mediates light-dependent intracellular transport of RPE65. The cofactor is Fe(2+). Palmitoylation by LRAT regulates ligand binding specificity; the palmitoylated form (membrane form) specifically binds all-trans-retinyl-palmitate, while the soluble unpalmitoylated form binds all-trans-retinol (vitamin A). In terms of tissue distribution, retinal pigment epithelium specific.

It localises to the cytoplasm. It is found in the cell membrane. The protein resides in the microsome membrane. The catalysed reaction is an all-trans-retinyl ester + H2O = 11-cis-retinol + a fatty acid + H(+). It catalyses the reaction lutein = (3R,3'S)-zeaxanthin. The enzyme catalyses all-trans-retinyl hexadecanoate + H2O = 11-cis-retinol + hexadecanoate + H(+). Functionally, critical isomerohydrolase in the retinoid cycle involved in regeneration of 11-cis-retinal, the chromophore of rod and cone opsins. Catalyzes the cleavage and isomerization of all-trans-retinyl fatty acid esters to 11-cis-retinol which is further oxidized by 11-cis retinol dehydrogenase to 11-cis-retinal for use as visual chromophore. Essential for the production of 11-cis retinal for both rod and cone photoreceptors. Also capable of catalyzing the isomerization of lutein to meso-zeaxanthin an eye-specific carotenoid. The soluble form binds vitamin A (all-trans-retinol), making it available for LRAT processing to all-trans-retinyl ester. The membrane form, palmitoylated by LRAT, binds all-trans-retinyl esters, making them available for IMH (isomerohydrolase) processing to all-cis-retinol. The soluble form is regenerated by transferring its palmitoyl groups onto 11-cis-retinol, a reaction catalyzed by LRAT. The sequence is that of Retinoid isomerohydrolase (RPE65) from Chlorocebus aethiops (Green monkey).